A 297-amino-acid polypeptide reads, in one-letter code: Leucine-rich repeat-containing protein 25 (297 aa).

The first 25 residues, 1–25 (MGSIRTRLLWLCLLMLLALLHKSGS), serve as a signal peptide directing secretion. At 26–169 (QDLTCMVHPS…SCPPSWGPGT (144 aa)) the chain is on the extracellular side. N-linked (GlcNAc...) asparagine glycans are attached at residues Asn-44 and Asn-49. 2 LRR repeats span residues 66–89 (HAQVLDLSKNGLQVLPGAFFDKLE) and 90–113 (KLQTLIVTHNQLDSVDRSLALRCD). Residues Asn-133 and Asn-152 are each glycosylated (N-linked (GlcNAc...) asparagine). The chain crosses the membrane as a helical span at residues 170-190 (IGALVAGTISLAVAVSGSVLA). The Cytoplasmic segment spans residues 191–297 (WRLLRRRRRA…VYCNLESLGR (107 aa)). The segment at 202 to 244 (EHSLSKAQMSPHDIPKPVTDFLPRYSSRRPGPKAPDSPPSRFT) is disordered. Phosphoserine is present on residues Ser-211, Ser-238, and Ser-267. Phosphotyrosine is present on Tyr-289.

As to quaternary structure, interacts with RIGI. Interacts with SQSTM1. Interacts with p65/RELA; this interaction promotes the degradation of RELA through autophagy.

It is found in the membrane. It localises to the cytoplasm. In terms of biological role, plays a role in the inhibition of RLR-mediated type I interferon signaling pathway by targeting RIGI for autophagic degradation. Interacts specifically with ISG15-associated RIGI to promote interaction between RIGI and the autophagic cargo receptor p62/SQSTM1 to mediate RIGI degradation via selective autophagy. Plays also a role in the inhibition of NF-kappa-B signaling pathway and inflammatory response by promoting the degradation of p65/RELA. This Mus musculus (Mouse) protein is Leucine-rich repeat-containing protein 25 (Lrrc25).